A 61-amino-acid chain; its full sequence is [Thr6]-bradykinyl-Val,Asp (61 aa).

An N-terminal signal peptide occupies residues 1 to 22; that stretch reads MSFLKKSLFLVLFLGLVSFSIC. Positions 23–50 are excised as a propeptide; that stretch reads EEEKRETEEEENEDEMDKESEEKRESPE. Residues 24–61 are disordered; sequence EEKRETEEEENEDEMDKESEEKRESPERPPGFTPFRVD. The span at 30–41 shows a compositional bias: acidic residues; it reads EEEENEDEMDKE. 4-hydroxyproline; in form [Hyp3,Thr6]-bradykinyl-Val,Asp and [Hyp3,Thr6]-bradykinin is present on proline 53.

The protein belongs to the frog skin active peptide (FSAP) family. Bradykinin-related peptide subfamily. In terms of tissue distribution, expressed by the skin glands.

It localises to the secreted. Induces relaxation of rat smooth muscle from tail artery (EC(50)=16.8 nM) and contraction of that from ileum (EC(50)=205 nM), urinary bladder (EC(50)=895 nM) and uterus (EC(50)=60.3 nM). Binds to both bradykinin receptor B1 (BDKRB1) and B2 (BDKRB2). In terms of biological role, [Hyp3,Thr6]-bradykinin: Induces relaxation of rat smooth muscle from tail artery (EC(50)=56.7 nM) and contraction of that from ileum (EC(50)=588 nM), urinary bladder (EC(50)=4.6 uM) and uterus (EC(50)=3.9 nM). Binds to both bradykinin receptor B1 (BDKRB1) and B2 (BDKRB2). In arterial smooth muscle, the effect via BDKRB1 is stronger, in uterus, ileum and urinary bladder that via BDKRB2. Functionally, induces relaxation of rat smooth muscle from tail artery (EC(50)=10.8 nM) and contraction of that from ileum (EC(50)=645 nM), urinary bladder (EC(50)=1.1 uM) and uterus (EC(50)=1.2 uM). Binds to both bradykinin receptor B1 (BDKRB1) and B2 (BDKRB2). Apart from uterus smooth muscle, the effect via B2 is stronger. Its function is as follows. [Hyp3,Thr6]-bradykinyl-Val,Asp: Induces relaxation of rat smooth muscle from tail artery (EC(50)=3.5 nM) and contraction of that from ileum (EC(50)=223 nM), urinary bladder (EC(50)=1.5 uM) and uterus (EC(50)=356 nM). Binds to both bradykinin receptor B1 (BDKRB1) and B2 (BDKRB2); the effects via B2 a stronger. This chain is [Thr6]-bradykinyl-Val,Asp, found in Agalychnis callidryas (Red-eyed tree frog).